The sequence spans 235 residues: 2-C-methyl-D-erythritol 4-phosphate cytidylyltransferase (235 aa).

It belongs to the IspD/TarI cytidylyltransferase family. IspD subfamily.

The enzyme catalyses 2-C-methyl-D-erythritol 4-phosphate + CTP + H(+) = 4-CDP-2-C-methyl-D-erythritol + diphosphate. Its pathway is isoprenoid biosynthesis; isopentenyl diphosphate biosynthesis via DXP pathway; isopentenyl diphosphate from 1-deoxy-D-xylulose 5-phosphate: step 2/6. Functionally, catalyzes the formation of 4-diphosphocytidyl-2-C-methyl-D-erythritol from CTP and 2-C-methyl-D-erythritol 4-phosphate (MEP). The sequence is that of 2-C-methyl-D-erythritol 4-phosphate cytidylyltransferase from Pseudomonas putida (strain ATCC 700007 / DSM 6899 / JCM 31910 / BCRC 17059 / LMG 24140 / F1).